Here is a 523-residue protein sequence, read N- to C-terminus: Sorting nexin-2 (523 aa).

The interval 1–104 (MAAEREPPPL…EPSPAVTPVT (104 aa)) is disordered. 2 stretches are compositionally biased toward low complexity: residues 27–48 (LFTSTVSTLESSPSSPEPTSLP) and 93–104 (SSEPSPAVTPVT). A Phosphoserine modification is found at S97. Phosphothreonine occurs at positions 101 and 104. Phosphoserine occurs at positions 117 and 119. The PX domain occupies 140–269 (FDIEIGVSDP…QFLESSELPR (130 aa)). The a 1,2-diacyl-sn-glycero-3-phospho-(1D-myo-inositol-3-phosphate) site is built by R183, S185, K211, and R235. A Phosphoserine modification is found at S185. The interaction with RhoG stretch occupies residues 260–523 (QFLESSELPR…AFLPEAKAIA (264 aa)). S277 is subject to Phosphoserine. Positions 278-295 (GAGILRMVNKAADAVNKM) are membrane-binding amphipathic helix. One can recognise a BAR domain in the interval 299–523 (MNESDAWFEE…AFLPEAKAIA (225 aa)). K473 is subject to N6-acetyllysine.

The protein belongs to the sorting nexin family. As to quaternary structure, predominantly forms heterodimers with BAR domain-containing sorting nexins SNX5, SNX6 and SNX32; can self-associate to form homodimers. The heterodimers are proposed to self-assemble into helical arrays on the membrane to stabilize and expand local membrane curvature underlying endosomal tubule formation. Thought to be a component of the originally described retromer complex (also called SNX-BAR retromer) which is a pentamer containing the heterotrimeric retromer cargo-selective complex (CSC), also described as vacuolar protein sorting subcomplex (VPS), and a heterodimeric membrane-deforming subcomplex formed between SNX1 or SNX2 and SNX5 or SNX6 (also called SNX-BAR subcomplex); the respective CSC and SNX-BAR subcomplexes associate with low affinity. Interacts with SNX5, SNX6, SNX32, VPS26A, VPS29, VPS35, FNBP1, KALRN, RHOG (GDP-bound form).

It is found in the early endosome membrane. Its subcellular location is the cell projection. The protein localises to the lamellipodium. Involved in several stages of intracellular trafficking. Interacts with membranes containing phosphatidylinositol 3-phosphate (PtdIns(3P)) or phosphatidylinositol 3,5-bisphosphate (PtdIns(3,5)P2). Acts in part as component of the retromer membrane-deforming SNX-BAR subcomplex. The SNX-BAR retromer mediates retrograde transport of cargo proteins from endosomes to the trans-Golgi network (TGN) and is involved in endosome-to-plasma membrane transport for cargo protein recycling. The SNX-BAR subcomplex functions to deform the donor membrane into a tubular profile called endosome-to-TGN transport carrier (ETC). Can sense membrane curvature and has in vitro vesicle-to-membrane remodeling activity. Required for retrograde endosome-to-TGN transport of TGN38. Promotes KALRN- and RHOG-dependent but retromer-independent membrane remodeling such as lamellipodium formation; the function is dependent on GEF activity of KALRN. This Pongo abelii (Sumatran orangutan) protein is Sorting nexin-2 (SNX2).